A 425-amino-acid chain; its full sequence is Phosphoribosylamine--glycine ligase (425 aa).

Residues 110 to 317 (KEFMKRHGIP…LFDALLASVE (208 aa)) form the ATP-grasp domain. 137–198 (ETCPTFPQVI…EAFLSGQEAS (62 aa)) is an ATP binding site. Positions 287 and 289 each coordinate Mg(2+).

The protein belongs to the GARS family. Mg(2+) is required as a cofactor. The cofactor is Mn(2+).

It carries out the reaction 5-phospho-beta-D-ribosylamine + glycine + ATP = N(1)-(5-phospho-beta-D-ribosyl)glycinamide + ADP + phosphate + H(+). It participates in purine metabolism; IMP biosynthesis via de novo pathway; N(1)-(5-phospho-D-ribosyl)glycinamide from 5-phospho-alpha-D-ribose 1-diphosphate: step 2/2. This Chlorobaculum tepidum (strain ATCC 49652 / DSM 12025 / NBRC 103806 / TLS) (Chlorobium tepidum) protein is Phosphoribosylamine--glycine ligase.